Reading from the N-terminus, the 592-residue chain is Vacuolin-B (592 aa).

The span at 1–30 shows a compositional bias: polar residues; sequence MIESSSFMKKTSSENSIGSRSNIHEASTFS. The segment at 1–35 is disordered; that stretch reads MIESSSFMKKTSSENSIGSRSNIHEASTFSSEHEN. Residues 480–534 adopt a coiled-coil conformation; the sequence is KTTEARLKAETDNIALEQKGKAIIAEAQAKLESAQKQAQALLITAEAQKKVQEMQ. Residues 491 to 555 form an oligomerization domain region; sequence DNIALEQKGK…EIELAKIKSE (65 aa).

The protein belongs to the vacuolin family. Homotrimer.

Its subcellular location is the endosome membrane. The protein localises to the lysosome membrane. Functionally, negative regulator of late steps of the endocytic pathway. This chain is Vacuolin-B (vacB), found in Dictyostelium discoideum (Social amoeba).